The chain runs to 76 residues: Small ribosomal subunit protein bS18 (76 aa).

Belongs to the bacterial ribosomal protein bS18 family. Part of the 30S ribosomal subunit. Forms a tight heterodimer with protein bS6.

Functionally, binds as a heterodimer with protein bS6 to the central domain of the 16S rRNA, where it helps stabilize the platform of the 30S subunit. The polypeptide is Small ribosomal subunit protein bS18 (Carboxydothermus hydrogenoformans (strain ATCC BAA-161 / DSM 6008 / Z-2901)).